The chain runs to 221 residues: Protein-L-isoaspartate O-methyltransferase (221 aa).

Ser68 is an active-site residue.

This sequence belongs to the methyltransferase superfamily. L-isoaspartyl/D-aspartyl protein methyltransferase family.

The protein localises to the cytoplasm. The enzyme catalyses [protein]-L-isoaspartate + S-adenosyl-L-methionine = [protein]-L-isoaspartate alpha-methyl ester + S-adenosyl-L-homocysteine. Catalyzes the methyl esterification of L-isoaspartyl residues in peptides and proteins that result from spontaneous decomposition of normal L-aspartyl and L-asparaginyl residues. It plays a role in the repair and/or degradation of damaged proteins. The protein is Protein-L-isoaspartate O-methyltransferase of Desulfosudis oleivorans (strain DSM 6200 / JCM 39069 / Hxd3) (Desulfococcus oleovorans).